An 88-amino-acid polypeptide reads, in one-letter code: Small ribosomal subunit protein bS20 (88 aa).

Over residues 1–23 the composition is skewed to basic and acidic residues; sequence MPNTKSAEKALRVADANRQENRR. The disordered stretch occupies residues 1-29; it reads MPNTKSAEKALRVADANRQENRRAKSQVK.

It belongs to the bacterial ribosomal protein bS20 family.

Binds directly to 16S ribosomal RNA. This is Small ribosomal subunit protein bS20 from Dehalococcoides mccartyi (strain ATCC BAA-2100 / JCM 16839 / KCTC 5957 / BAV1).